Here is a 377-residue protein sequence, read N- to C-terminus: MKIDEVNFKDKTKVTVFSGMQPTSSALHLGNYLGAMGNWLKIQDLVTKNNKEEEELLNLSESSSSSSSSQSTKINEKHKLIFSIVDLHSLTSTKSLSPKELQSNTISVAINYLACGIDPEKVILFNQSMVPAHSELTWILNCITSFSKLSNMIQFKEKTKSSNEASVSNGLLSYPVLMAADILLYKATHVPVGEDQTQHLEFTRDIAQAFHSNFKSKFFPYPSIITSEQSKRIMSLQDGRLKMSKSDPLEISRISLTDTDDQIKLKIKKSKTDTIIGITYDPINRPDISNLLSIASETSGIPITDLQSEFKDKSNAIFKEFLSNSIIKNISPIREKINYYQSNPKLVRDILLQGSEKANKIANKNLNIIKDIVGLYH.

Residues Gln21 and 28 to 31 contribute to the ATP site; that span reads HLGN. Residues 22–31 carry the 'HIGH' region motif; sequence PTSSALHLGN. Residue Asp181 coordinates L-tryptophan. ATP is bound by residues 193 to 195, 242 to 246, and Lys245; these read GED and KMSKS. The 'KMSKS' region signature appears at 242 to 246; it reads KMSKS.

Belongs to the class-I aminoacyl-tRNA synthetase family.

It localises to the mitochondrion matrix. It carries out the reaction tRNA(Trp) + L-tryptophan + ATP = L-tryptophyl-tRNA(Trp) + AMP + diphosphate + H(+). The polypeptide is Tryptophan--tRNA ligase, mitochondrial (wars2) (Dictyostelium discoideum (Social amoeba)).